The chain runs to 78 residues: Longicornsin (78 aa).

Residues 1–22 (MAESTTTCFLLLVTGYVTAVMS) form the signal peptide. Residues 23 to 29 (EEAHLRS) constitute a propeptide that is removed on maturation. Disulfide bonds link Cys-35-Cys-58, Cys-43-Cys-63, and Cys-47-Cys-65.

In terms of tissue distribution, salivary glands (at protein level).

The protein resides in the secreted. Functionally, has antibacterial activity against the Gram-positive bacteria S.aureus ATCC2592 (MIC=0.8 ug/ml), S.aureus 6A (MIC=0.8 ug/ml) and S.aureus 15A (MIC=1.6 ug/ml), and against the Gram-negative bacteria E.coli ATCC 25922 (MIC=3.2 ug/ml), E.coli 23A (MIC=6.4 ug/ml), E.coli 27A (MIC=6.4 ug/ml), P.aeruginosa 3A (MIC=3.2 ug/ml), P.aeruginosa 7A (MIC=0.8 ug/ml) and H.pylori NCTC11637 (MIC=6.4 ug/ml). Has antifungal activity against C.albidus ATCC2002 (MIC=25.6 ug/ml). Very low hemolytic activity against rabbit erythrocytes. This Haemaphysalis longicornis (Bush tick) protein is Longicornsin.